Reading from the N-terminus, the 249-residue chain is Ubiquinone biosynthesis O-methyltransferase (249 aa).

Residues R44, G75, D96, and M138 each contribute to the S-adenosyl-L-methionine site.

The protein belongs to the methyltransferase superfamily. UbiG/COQ3 family.

It carries out the reaction a 3-demethylubiquinol + S-adenosyl-L-methionine = a ubiquinol + S-adenosyl-L-homocysteine + H(+). The catalysed reaction is a 3-(all-trans-polyprenyl)benzene-1,2-diol + S-adenosyl-L-methionine = a 2-methoxy-6-(all-trans-polyprenyl)phenol + S-adenosyl-L-homocysteine + H(+). It functions in the pathway cofactor biosynthesis; ubiquinone biosynthesis. Its function is as follows. O-methyltransferase that catalyzes the 2 O-methylation steps in the ubiquinone biosynthetic pathway. The protein is Ubiquinone biosynthesis O-methyltransferase of Paramagnetospirillum magneticum (strain ATCC 700264 / AMB-1) (Magnetospirillum magneticum).